The following is a 206-amino-acid chain: Ras-related protein RABG3e (206 aa).

Glycine 15–threonine 22 serves as a coordination point for GTP. The short motif at tyrosine 37–phenylalanine 45 is the Effector region element. Residues aspartate 63–glutamine 67, asparagine 125–aspartate 128, and serine 158–alanine 159 contribute to the GTP site. S-geranylgeranyl cysteine attachment occurs at residues cysteine 204 and cysteine 206. The residue at position 206 (cysteine 206) is a Cysteine methyl ester.

This sequence belongs to the small GTPase superfamily. Rab family.

It is found in the cell membrane. Its function is as follows. Intracellular vesicle trafficking and protein transport. May play a role in adaptation to stress by recylcing macromolecules in specific cellular compartments. The chain is Ras-related protein RABG3e (RABG3E) from Arabidopsis thaliana (Mouse-ear cress).